The chain runs to 940 residues: Isoleucine--tRNA ligase (940 aa).

The 'HIGH' region motif lies at 58–68; sequence PYANGSIHIGH. E564 provides a ligand contact to L-isoleucyl-5'-AMP. The 'KMSKS' region signature appears at 605–609; that stretch reads KMSKS. K608 contributes to the ATP binding site. Positions 903, 906, 923, and 926 each coordinate Zn(2+).

This sequence belongs to the class-I aminoacyl-tRNA synthetase family. IleS type 1 subfamily. As to quaternary structure, monomer. Requires Zn(2+) as cofactor.

The protein resides in the cytoplasm. The catalysed reaction is tRNA(Ile) + L-isoleucine + ATP = L-isoleucyl-tRNA(Ile) + AMP + diphosphate. Catalyzes the attachment of isoleucine to tRNA(Ile). As IleRS can inadvertently accommodate and process structurally similar amino acids such as valine, to avoid such errors it has two additional distinct tRNA(Ile)-dependent editing activities. One activity is designated as 'pretransfer' editing and involves the hydrolysis of activated Val-AMP. The other activity is designated 'posttransfer' editing and involves deacylation of mischarged Val-tRNA(Ile). The chain is Isoleucine--tRNA ligase from Shewanella oneidensis (strain ATCC 700550 / JCM 31522 / CIP 106686 / LMG 19005 / NCIMB 14063 / MR-1).